Reading from the N-terminus, the 343-residue chain is Ribosomal RNA small subunit methyltransferase C (343 aa).

This sequence belongs to the methyltransferase superfamily. RsmC family. As to quaternary structure, monomer.

It localises to the cytoplasm. It carries out the reaction guanosine(1207) in 16S rRNA + S-adenosyl-L-methionine = N(2)-methylguanosine(1207) in 16S rRNA + S-adenosyl-L-homocysteine + H(+). Specifically methylates the guanine in position 1207 of 16S rRNA in the 30S particle. This Escherichia coli (strain 55989 / EAEC) protein is Ribosomal RNA small subunit methyltransferase C.